The sequence spans 205 residues: MAFDKSEWVPLTGLGRMVQAGEIKSIDEILSSGKPIKEPEIVDAFLPDLVDEVLDINMVQRMTDSGRRVKFRAVVVVGNRDGYIGFGQGKDAQVGDAIKKAIVSAKINLVKVRRGCGSWECGCSNPHSIPMLVTGDAGSVRVTLRPAPQGIGLVTGDIGKKVLELAGIRDVWAQTQGQTRTTINYAKATFNALKATNMIRLGGME.

Residues 49–112 (LVDEVLDINM…VSAKINLVKV (64 aa)) enclose the S5 DRBM domain.

Belongs to the universal ribosomal protein uS5 family. Part of the 30S ribosomal subunit. Contacts protein S4.

Functionally, with S4 and S12 plays an important role in translational accuracy. In Methanospirillum hungatei JF-1 (strain ATCC 27890 / DSM 864 / NBRC 100397 / JF-1), this protein is Small ribosomal subunit protein uS5.